Here is a 128-residue protein sequence, read N- to C-terminus: Large-conductance mechanosensitive channel (128 aa).

Helical transmembrane passes span 11–31 and 70–90; these read FALKGNVLDLAVAVVIGAAFG and GAFIQSIVDFVIIAFAIFIFV.

The protein belongs to the MscL family. In terms of assembly, homopentamer.

It localises to the cell membrane. Functionally, channel that opens in response to stretch forces in the membrane lipid bilayer. May participate in the regulation of osmotic pressure changes within the cell. This is Large-conductance mechanosensitive channel from Listeria monocytogenes serotype 4b (strain CLIP80459).